We begin with the raw amino-acid sequence, 88 residues long: FXYD domain-containing ion transport regulator 4 (88 aa).

Residues 1-20 form the signal peptide; sequence MEEITCAFLLLLAGLPALEA. The Extracellular segment spans residues 21–38; that stretch reads SDPVDKDSPFYYDWESLQ. A helical membrane pass occupies residues 39-59; the sequence is LGGLIFGGLLCIAGIAMALSG. Residues 60 to 88 lie on the Cytoplasmic side of the membrane; the sequence is KCKCRRTHKPSSLPGKATPLIIPGSANTC.

It belongs to the FXYD family. Regulatory subunit of the sodium/potassium-transporting ATPase which is composed of a catalytic alpha subunit, a non-catalytic beta subunit and a regulatory subunit. The regulatory subunit, a member of the FXYD protein family, modulates the enzymatic activity in a tissue- and isoform-specific way by changing affinities of the Na+/K+-ATPase toward Na(+), K(+) or ATP.

It is found in the cell membrane. Its subcellular location is the basolateral cell membrane. Associates with and regulates the activity of the sodium/potassium-transporting ATPase (NKA) which catalyzes the hydrolysis of ATP coupled with the exchange of Na(+) and K(+) ions across the plasma membrane. Increases the apparent affinity of the transporter for Na(+) and increases NKA activity. This is FXYD domain-containing ion transport regulator 4 (Fxyd4) from Mus musculus (Mouse).